The primary structure comprises 485 residues: MMHFKSGLELTELQNMTVPEDDNVSNDSNDFTEVENGQINSKFISDRESRRSLTNSHLEKRKCDEYIPGTTSLGMSVFNLSNAIMGSGILGLAFALANTGILLFLILLTSVTLLSIYSINLLLICSKETGCMVYEKLGEQVFGTTGKLVIFGATSLQNTGAMLSYLFIVKNELPSAIKSLMGEEDAFSAWYVDGRVLVVMVTFGIILPLCLLKNLGYLGYTSGFSLSCMMFFLIVVIYKKFQTPCMSVEQNSTVSANVTDACTPKYVTFNSKTVYALPTIAFAFVCHPSVLPIYSELKDRSQKKMQMVSNISFFAMFVMYFLTAIFGYLTFYEKVQSDLLHKYQSTGDILILTVRLAVIVAVILTVPVLFFTVRSSLFELAKKTKFHLCRHVLVTIILLIIINLLVIFIPSMKDIFGVVGVTSANMLIFILPSSLYLKITNQDGDKGTQRIWAALFLGLGVLFSLISIPLVIYDWACSSGTDEGH.

At Met1–Gly74 the chain is on the cytoplasmic side. Phosphoserine is present on Ser6. Position 11 is a phosphothreonine (Thr11). A phosphoserine mark is found at Ser25, Ser28, Ser49, and Ser52. Thr54 is subject to Phosphothreonine. Ser56 carries the phosphoserine modification. The helical transmembrane segment at Met75–Ala97 threads the bilayer. The Extracellular portion of the chain corresponds to Asn98 to Thr112. A helical membrane pass occupies residues Leu113–Val133. Residues Tyr134–Leu148 lie on the Cytoplasmic side of the membrane. The helical transmembrane segment at Val149–Val169 threads the bilayer. The Extracellular segment spans residues Lys170–Ser188. A helical transmembrane segment spans residues Ala189–Leu211. The Cytoplasmic portion of the chain corresponds to Leu212–Gly216. A helical transmembrane segment spans residues Tyr217–Ile237. Residues Tyr238–Thr273 are Extracellular-facing. Residues Cys245 and Cys262 are joined by a disulfide bond. N-linked (GlcNAc...) asparagine glycosylation is found at Asn251 and Asn257. A helical transmembrane segment spans residues Val274–Tyr294. The Cytoplasmic portion of the chain corresponds to Ser295–Asn310. Residues Ile311–Phe331 form a helical membrane-spanning segment. Residues Tyr332 to Asp348 lie on the Extracellular side of the membrane. Residues Ile349–Leu369 traverse the membrane as a helical segment. Residues Phe370–His391 lie on the Cytoplasmic side of the membrane. The helical transmembrane segment at Val392 to Met412 threads the bilayer. Topologically, residues Lys413–Asp414 are extracellular. Residues Ile415 to Leu435 traverse the membrane as a helical segment. Topologically, residues Tyr436–Arg450 are cytoplasmic. Residues Ile451 to Val471 form a helical membrane-spanning segment. Topologically, residues Ile472–His485 are extracellular.

It belongs to the amino acid/polyamine transporter 2 family. N-glycosylation plays an important role in the L-glutamine transport. As to expression, specifically expressed in brain and retina (at protein level). Also detected in spleen, small intestine and lung.

It is found in the cell membrane. The enzyme catalyses L-glutamine(in) + Na(+)(in) = L-glutamine(out) + Na(+)(out). It carries out the reaction L-alanine(in) + Na(+)(in) = L-alanine(out) + Na(+)(out). It catalyses the reaction L-histidine(in) + Na(+)(in) = L-histidine(out) + Na(+)(out). The catalysed reaction is L-asparagine(in) + Na(+)(in) = L-asparagine(out) + Na(+)(out). The enzyme catalyses L-serine(in) + Na(+)(in) = L-serine(out) + Na(+)(out). It carries out the reaction L-cysteine(in) + Na(+)(in) = L-cysteine(out) + Na(+)(out). It catalyses the reaction L-methionine(in) + Na(+)(in) = L-methionine(out) + Na(+)(out). The catalysed reaction is glycine(in) + Na(+)(in) = glycine(out) + Na(+)(out). The enzyme catalyses L-threonine(in) + Na(+)(in) = L-threonine(out) + Na(+)(out). It carries out the reaction L-proline(in) + Na(+)(in) = L-proline(out) + Na(+)(out). Its activity is regulated as follows. Inhibited by alpha-(methylamino)isobutyric acid (MeAIB). Inhibited by lithium, potassium, choline ions, N-methylglucamine. The pH dependence has an allosteric effect on the transport. Functionally, symporter that cotransports short-chain neutral amino acids and sodium ions from the extraccellular to the intracellular side of the cell membrane. The transport is elctrogenic, pH dependent and driven by the Na(+) electrochemical gradient. Participates in the astroglia-derived glutamine transport into GABAergic interneurons for neurotransmitter GABA de novo synthesis. May also contributes to amino acid transport in placental trophoblast. Regulates synaptic plasticity. The polypeptide is Sodium-coupled neutral amino acid symporter 1 (Mus musculus (Mouse)).